The primary structure comprises 910 residues: Protein CHROMATIN REMODELING 25 (910 aa).

Composition is skewed to acidic residues over residues 1-18 (MEEE…DDSS) and 26-39 (QDSE…ECED). Residues 1–39 (MEEEDEEILSSSDCDDSSDSYKDDSQDSEGENDNPECED) form a disordered region. Positions 198-371 (LHGSANINGC…FAMVNFTNPG (174 aa)) constitute a Helicase ATP-binding domain. 211–218 (DDMGLGKT) is an ATP binding site. A DEAH box motif is present at residues 322–325 (DEAH). Residues 396 to 417 (TEEEKNLAADRSAELSSKVNQF) are a coiled coil. The region spanning 538 to 696 (VLSRLLANLR…QTDNSTRQGN (159 aa)) is the Helicase C-terminal domain. The tract at residues 828–861 (VSPKTVESEEHNRNQPVNKRAFNKPQQRPREPLQ) is disordered.

The protein belongs to the SNF2/RAD54 helicase family. As to quaternary structure, interacts with RAD51. Binds to the geminivirus mungbean yellow mosaic virus (MYMV) and to the tomato leaf curl virus (ToLCV) replication-associated proteins. In terms of tissue distribution, expressed ubiquitously, with the highest levels of expression in flower buds. Present in flower buds (at protein level).

Its subcellular location is the nucleus. Dissociates RAD51 from nucleoprotein filaments formed on dsDNA. Could be involved in the turnover of RAD51 protein-dsDNA filaments. Addition of RAD54 overcomes inhibition of DNA strand exchange by RAD51 bound to substrate dsDNA. Species preference in the RAD51 dissociation and DNA strand exchange assays underlines the importance of specific RAD54-RAD51 interactions. RAD51 is unable to release dsDNA upon ATP hydrolysis, leaving it stuck on the heteroduplex DNA product after DNA strand exchange. Involved in DNA repair and mitotic recombination. Functions in the homologous recombinational DNA repair (RAD52) pathway. Required for synthesis-dependent strand annealing (SDSA) during double-strand break repair. In terms of biological role, facilitates geminiviral replication (e.g. geminivirus mungbean yellow mosaic virus (MYMV) and tomato leaf curl virus (ToLCV)). In Arabidopsis thaliana (Mouse-ear cress), this protein is Protein CHROMATIN REMODELING 25 (CHR25).